The sequence spans 207 residues: Segregation and condensation protein B (207 aa).

The protein belongs to the ScpB family. As to quaternary structure, homodimer. Homodimerization may be required to stabilize the binding of ScpA to the Smc head domains. Component of a cohesin-like complex composed of ScpA, ScpB and the Smc homodimer, in which ScpA and ScpB bind to the head domain of Smc. The presence of the three proteins is required for the association of the complex with DNA.

The protein localises to the cytoplasm. Participates in chromosomal partition during cell division. May act via the formation of a condensin-like complex containing Smc and ScpA that pull DNA away from mid-cell into both cell halves. In Mycoplasma genitalium (strain ATCC 33530 / DSM 19775 / NCTC 10195 / G37) (Mycoplasmoides genitalium), this protein is Segregation and condensation protein B.